The following is a 72-amino-acid chain: Translation initiation factor IF-1 (72 aa).

In terms of domain architecture, S1-like spans 1–72 (MAKEEQIELE…TKGRITFRMK (72 aa)).

Belongs to the IF-1 family. Component of the 30S ribosomal translation pre-initiation complex which assembles on the 30S ribosome in the order IF-2 and IF-3, IF-1 and N-formylmethionyl-tRNA(fMet); mRNA recruitment can occur at any time during PIC assembly.

It localises to the cytoplasm. Functionally, one of the essential components for the initiation of protein synthesis. Stabilizes the binding of IF-2 and IF-3 on the 30S subunit to which N-formylmethionyl-tRNA(fMet) subsequently binds. Helps modulate mRNA selection, yielding the 30S pre-initiation complex (PIC). Upon addition of the 50S ribosomal subunit IF-1, IF-2 and IF-3 are released leaving the mature 70S translation initiation complex. In Alcanivorax borkumensis (strain ATCC 700651 / DSM 11573 / NCIMB 13689 / SK2), this protein is Translation initiation factor IF-1.